Consider the following 273-residue polypeptide: Flagellin FljO (273 aa).

This sequence belongs to the bacterial flagellin family. In terms of assembly, in C.crescentus, the flagellar filament is composed of multiple flagellins of 29 kDa; 27 kDa and 25 kDa.

It localises to the secreted. The protein resides in the bacterial flagellum. Flagellin is the subunit protein which polymerizes to form the filaments of bacterial flagella. The sequence is that of Flagellin FljO (fljO) from Caulobacter vibrioides (strain ATCC 19089 / CIP 103742 / CB 15) (Caulobacter crescentus).